A 291-amino-acid polypeptide reads, in one-letter code: Phosphatidylglycerol--prolipoprotein diacylglyceryl transferase (291 aa).

Transmembrane regions (helical) follow at residues 21-41, 60-80, 96-116, 124-144, 198-218, 225-245, and 258-278; these read IALH…MWLA, LLYA…VLFY, WDGG…MWWF, FLQV…MGRI, SQLY…NLYI, GSVS…VEFF, and ISMG…MMIW. R143 contributes to the a 1,2-diacyl-sn-glycero-3-phospho-(1'-sn-glycerol) binding site.

This sequence belongs to the Lgt family.

Its subcellular location is the cell inner membrane. It carries out the reaction L-cysteinyl-[prolipoprotein] + a 1,2-diacyl-sn-glycero-3-phospho-(1'-sn-glycerol) = an S-1,2-diacyl-sn-glyceryl-L-cysteinyl-[prolipoprotein] + sn-glycerol 1-phosphate + H(+). The protein operates within protein modification; lipoprotein biosynthesis (diacylglyceryl transfer). Functionally, catalyzes the transfer of the diacylglyceryl group from phosphatidylglycerol to the sulfhydryl group of the N-terminal cysteine of a prolipoprotein, the first step in the formation of mature lipoproteins. The polypeptide is Phosphatidylglycerol--prolipoprotein diacylglyceryl transferase (Photorhabdus laumondii subsp. laumondii (strain DSM 15139 / CIP 105565 / TT01) (Photorhabdus luminescens subsp. laumondii)).